Here is a 157-residue protein sequence, read N- to C-terminus: Heavy metal-associated isoprenylated plant protein 16 (157 aa).

Residues lysine 2–valine 71 enclose the HMA domain. The tract at residues lysine 73–proline 115 is disordered. Positions glutamate 75 to glutamate 106 are enriched in basic and acidic residues. At cysteine 154 the chain carries Cysteine methyl ester. Residue cysteine 154 is the site of S-farnesyl cysteine attachment. Residues arginine 155–methionine 157 constitute a propeptide, removed in mature form.

It belongs to the HIPP family.

Functionally, probable heavy-metal-binding protein. The polypeptide is Heavy metal-associated isoprenylated plant protein 16 (Arabidopsis thaliana (Mouse-ear cress)).